The sequence spans 348 residues: Lysophosphatidic acid receptor 2 (348 aa).

Residues 1 to 30 lie on the Extracellular side of the membrane; sequence MGHCYYNETIGFFYNNSGKELSSHWRPKDV. 2 N-linked (GlcNAc...) asparagine glycosylation sites follow: N7 and N15. The helical transmembrane segment at 31 to 51 threads the bilayer; the sequence is VVVALGLTVSVLVLLTNLLVI. Residues 52-66 lie on the Cytoplasmic side of the membrane; the sequence is AAIASNRRFHQPIYY. The chain crosses the membrane as a helical span at residues 67 to 87; the sequence is LLGNLAAADLFAGVAYLFLMF. Residues 88–104 are Extracellular-facing; the sequence is HTGPRTARLSLEGWFLR. The helical transmembrane segment at 105 to 124 threads the bilayer; that stretch reads QGLLDTSLTASVATLLAIAV. Residues 125 to 143 are Cytoplasmic-facing; that stretch reads ERRRSVMAVQLHSRLPRGR. Residues 144-164 traverse the membrane as a helical segment; it reads VVMLIVGVWVAALGLGLLPAH. At 165 to 185 the chain is on the extracellular side; that stretch reads SWHCLCALDRCSRMAPLLSRS. Residues 186 to 206 form a helical membrane-spanning segment; it reads YLAVWALSSLLVFLLMVAVYT. The Cytoplasmic segment spans residues 207 to 239; that stretch reads RIFFYVRRRVQRMAEHVSCHPRYRETTLSLVKT. The chain crosses the membrane as a helical span at residues 240–260; that stretch reads VVIILGAFVVCWTPGQVVLLL. Residues 261–276 are Extracellular-facing; that stretch reads DGLGCKSCNVLAVEKY. Residues 277–294 traverse the membrane as a helical segment; the sequence is FLLLAEANSLVNAAVYSC. Residues 295-348 are Cytoplasmic-facing; that stretch reads RDAEMRRTFRRLLCCACLRRSTRESAHYTSSAQGGASTRIMLPENGHPLMDSTL. The S-palmitoyl cysteine moiety is linked to residue C308. Positions 345 to 348 match the PDZ-binding motif; the sequence is DSTL.

Belongs to the G-protein coupled receptor 1 family. As to quaternary structure, interacts with SLC9A3R2/NHERF2, MAGI3 and PLCB3. Interacts with RALA and GRK2.

It is found in the cell surface. The protein localises to the cell membrane. Receptor for lysophosphatidic acid (LPA), a mediator of diverse cellular activities. Seems to be coupled to the G(i)/G(o), G(12)/G(13), and G(q) families of heteromeric G proteins. Plays a key role in phospholipase C-beta (PLC-beta) signaling pathway. Stimulates phospholipase C (PLC) activity in a manner that is independent of RALA activation. This chain is Lysophosphatidic acid receptor 2, found in Macaca fascicularis (Crab-eating macaque).